The chain runs to 213 residues: Protein ras-1 (213 aa).

A GTP-binding site is contributed by 15–22; sequence GGGGVGKS. Residues 37–45 carry the Effector region motif; sequence YDPTIEDSY. GTP contacts are provided by residues 62–66 and 121–124; these read DTAGQ and NKYD. Cysteine methyl ester is present on C210. A lipid anchor (S-farnesyl cysteine) is attached at C210. A propeptide spans 211-213 (removed in mature form); sequence IMM.

Belongs to the small GTPase superfamily. Ras family.

It localises to the cell membrane. The enzyme catalyses GTP + H2O = GDP + phosphate + H(+). In terms of biological role, ras proteins bind GDP/GTP and possess intrinsic GTPase activity. The sequence is that of Protein ras-1 (ras-1) from Neurospora crassa (strain ATCC 24698 / 74-OR23-1A / CBS 708.71 / DSM 1257 / FGSC 987).